A 210-amino-acid polypeptide reads, in one-letter code: Outer-membrane lipoprotein LolB (210 aa).

The N-terminal stretch at M1–G18 is a signal peptide. A lipid anchor (N-palmitoyl cysteine) is attached at C19. C19 carries the S-diacylglycerol cysteine lipid modification.

The protein belongs to the LolB family. As to quaternary structure, monomer.

The protein localises to the cell outer membrane. Functionally, plays a critical role in the incorporation of lipoproteins in the outer membrane after they are released by the LolA protein. This chain is Outer-membrane lipoprotein LolB, found in Actinobacillus pleuropneumoniae serotype 7 (strain AP76).